Reading from the N-terminus, the 266-residue chain is Luciferase (266 aa).

A helical membrane pass occupies residues glycine 22–isoleucine 41.

The protein belongs to the fungal luciferase family.

Its subcellular location is the membrane. It carries out the reaction 3-hydroxyhispidin + O2 = (E)-caffeoylpyruvate + hnu + CO2. It catalyses the reaction 3-hydroxyhispidin + O2 = 4-[(E)-2-(3,4-dihydroxyphenyl)ethenyl]-1,7-dihydroxy-2,3,5-trioxabicyclo[2.2.2]oct-7-en-6-one. Luciferase; part of the gene cluster that mediates the fungal bioluminescence cycle. Uses the fungal luciferin 3-hydroxyhispidin as a substrate to produce an endoperoxide as a high-energy intermediate with decomposition that yields oxyluciferin (also known as caffeoylpyruvate) and light emission. The fungal bioluminescence cycle begins with the hispidin synthetase that catalyzes the formation of hispidin which is further hydroxylated by the hispidin-3-hydroxylase, yielding the fungal luciferin 3-hydroxyhispidin. The luciferase then produces an endoperoxide as a high-energy intermediate with decomposition that yields oxyluciferin and light emission. Oxyluciferin can be recycled to caffeic acid by caffeoylpyruvate hydrolase. In Armillaria gallica (Bulbous honey fungus), this protein is Luciferase.